The primary structure comprises 846 residues: Translation initiation factor IF-2 (846 aa).

The interval 199–219 is disordered; the sequence is KREEEEKKSKAKKAGGKGFKK. Basic residues predominate over residues 207–219; the sequence is SKAKKAGGKGFKK. Residues 345-512 form the tr-type G domain; that stretch reads SRAPVVTIMG…AVLLQSEVLE (168 aa). The segment at 354–361 is G1; that stretch reads GHVDHGKT. Residue 354-361 coordinates GTP; it reads GHVDHGKT. The interval 379–383 is G2; the sequence is GITQH. The tract at residues 400–403 is G3; the sequence is DTPG. Residues 400-404 and 454-457 contribute to the GTP site; these read DTPGH and NKID. Positions 454-457 are G4; that stretch reads NKID. The tract at residues 490–492 is G5; sequence SAK.

It belongs to the TRAFAC class translation factor GTPase superfamily. Classic translation factor GTPase family. IF-2 subfamily.

The protein resides in the cytoplasm. In terms of biological role, one of the essential components for the initiation of protein synthesis. Protects formylmethionyl-tRNA from spontaneous hydrolysis and promotes its binding to the 30S ribosomal subunits. Also involved in the hydrolysis of GTP during the formation of the 70S ribosomal complex. This chain is Translation initiation factor IF-2, found in Francisella tularensis subsp. holarctica (strain LVS).